A 421-amino-acid polypeptide reads, in one-letter code: Serine--tRNA ligase (421 aa).

Residue 229-231 (TAE) coordinates L-serine. ATP is bound at residue 260 to 262 (RAE). Glu283 serves as a coordination point for L-serine. 347–350 (EISS) is an ATP binding site. Residue Ser383 participates in L-serine binding.

It belongs to the class-II aminoacyl-tRNA synthetase family. Type-1 seryl-tRNA synthetase subfamily. As to quaternary structure, homodimer. The tRNA molecule binds across the dimer.

The protein localises to the cytoplasm. The enzyme catalyses tRNA(Ser) + L-serine + ATP = L-seryl-tRNA(Ser) + AMP + diphosphate + H(+). It catalyses the reaction tRNA(Sec) + L-serine + ATP = L-seryl-tRNA(Sec) + AMP + diphosphate + H(+). It functions in the pathway aminoacyl-tRNA biosynthesis; selenocysteinyl-tRNA(Sec) biosynthesis; L-seryl-tRNA(Sec) from L-serine and tRNA(Sec): step 1/1. Functionally, catalyzes the attachment of serine to tRNA(Ser). Is also able to aminoacylate tRNA(Sec) with serine, to form the misacylated tRNA L-seryl-tRNA(Sec), which will be further converted into selenocysteinyl-tRNA(Sec). This is Serine--tRNA ligase from Desulfitobacterium hafniense (strain DSM 10664 / DCB-2).